The following is a 347-amino-acid chain: Protein RecA (347 aa).

67-74 (GPESSGKT) provides a ligand contact to ATP.

The protein belongs to the RecA family.

It is found in the cytoplasm. In terms of biological role, can catalyze the hydrolysis of ATP in the presence of single-stranded DNA, the ATP-dependent uptake of single-stranded DNA by duplex DNA, and the ATP-dependent hybridization of homologous single-stranded DNAs. It interacts with LexA causing its activation and leading to its autocatalytic cleavage. The protein is Protein RecA of Helicobacter pylori (strain G27).